Reading from the N-terminus, the 77-residue chain is U8-lycotoxin-Ls1r (77 aa).

The signal sequence occupies residues 1–20 (MKLIIFTGLVLFAIVSLIEA). The propeptide occupies 21–26 (QAENEK).

It belongs to the neurotoxin 19 (CSTX) family. 08 (U8-Lctx) subfamily. Post-translationally, contains 4 disulfide bonds. In terms of tissue distribution, expressed by the venom gland.

It localises to the secreted. This chain is U8-lycotoxin-Ls1r, found in Lycosa singoriensis (Wolf spider).